Here is a 328-residue protein sequence, read N- to C-terminus: GMP reductase (328 aa).

The active-site Thioimidate intermediate is Cys174. Position 203–226 (203–226 (IIADGGIRTHGDIAKSIRFGASMV)) interacts with NADP(+).

It belongs to the IMPDH/GMPR family. GuaC type 2 subfamily.

It catalyses the reaction IMP + NH4(+) + NADP(+) = GMP + NADPH + 2 H(+). Catalyzes the irreversible NADPH-dependent deamination of GMP to IMP. It functions in the conversion of nucleobase, nucleoside and nucleotide derivatives of G to A nucleotides, and in maintaining the intracellular balance of A and G nucleotides. This chain is GMP reductase, found in Staphylococcus saprophyticus subsp. saprophyticus (strain ATCC 15305 / DSM 20229 / NCIMB 8711 / NCTC 7292 / S-41).